A 218-amino-acid polypeptide reads, in one-letter code: Uracil-DNA glycosylase (218 aa).

Asp59 functions as the Proton acceptor in the catalytic mechanism.

The protein belongs to the uracil-DNA glycosylase (UDG) superfamily. UNG family.

It is found in the cytoplasm. It catalyses the reaction Hydrolyzes single-stranded DNA or mismatched double-stranded DNA and polynucleotides, releasing free uracil.. In terms of biological role, excises uracil residues from the DNA which can arise as a result of misincorporation of dUMP residues by DNA polymerase or due to deamination of cytosine. The chain is Uracil-DNA glycosylase from Staphylococcus saprophyticus subsp. saprophyticus (strain ATCC 15305 / DSM 20229 / NCIMB 8711 / NCTC 7292 / S-41).